We begin with the raw amino-acid sequence, 292 residues long: Protease HtpX (292 aa).

The next 2 membrane-spanning stretches (helical) occupy residues 5–25 (IFLF…VMSV) and 34–54 (SGLL…SLLL). H140 contributes to the Zn(2+) binding site. E141 is an active-site residue. Residue H144 coordinates Zn(2+). 2 helical membrane passes run 155-175 (LLQG…GGII) and 193-213 (IIVF…AMWF). E218 serves as a coordination point for Zn(2+).

It belongs to the peptidase M48B family. Zn(2+) serves as cofactor.

Its subcellular location is the cell inner membrane. The polypeptide is Protease HtpX (Xanthomonas oryzae pv. oryzae (strain PXO99A)).